Here is a 63-residue protein sequence, read N- to C-terminus: Sec-independent protein translocase protein TatA (63 aa).

Residues 1-21 form a helical membrane-spanning segment; sequence MGGLSVGSVVLIALVALLIFG.

This sequence belongs to the TatA/E family. In terms of assembly, forms a complex with TatC.

The protein resides in the cell membrane. Functionally, part of the twin-arginine translocation (Tat) system that transports large folded proteins containing a characteristic twin-arginine motif in their signal peptide across membranes. TatA could form the protein-conducting channel of the Tat system. The chain is Sec-independent protein translocase protein TatA from Shouchella clausii (strain KSM-K16) (Alkalihalobacillus clausii).